The sequence spans 64 residues: Prokaryotic ubiquitin-like protein Pup (64 aa).

The ARC ATPase binding stretch occupies residues Gln20 to Phe58. Glu64 participates in a covalent cross-link: Isoglutamyl lysine isopeptide (Glu-Lys) (interchain with K-? in acceptor proteins).

The protein belongs to the prokaryotic ubiquitin-like protein family. Strongly interacts with the proteasome-associated ATPase ARC through a hydrophobic interface; the interacting region of Pup lies in its C-terminal half. There is one Pup binding site per ARC hexamer ring.

It participates in protein degradation; proteasomal Pup-dependent pathway. Functionally, protein modifier that is covalently attached to lysine residues of substrate proteins, thereby targeting them for proteasomal degradation. The tagging system is termed pupylation. In Rothia mucilaginosa (strain DY-18) (Stomatococcus mucilaginosus), this protein is Prokaryotic ubiquitin-like protein Pup.